Reading from the N-terminus, the 553-residue chain is Threonylcarbamoyladenosine tRNA methylthiotransferase (553 aa).

A disordered region spans residues 21–61; it reads SAEDVKPQERYQNKKSVTVRAKKRVQIKPETDAEEKPTPRP. 2 stretches are compositionally biased toward basic and acidic residues: residues 23–32 and 47–58; these read EDVKPQERYQ and IKPETDAEEKPT. The MTTase N-terminal domain maps to 72–179; the sequence is QKVFVKTWGC…VVEVVEETLK (108 aa). Positions 81, 116, 145, 221, 225, and 228 each coordinate [4Fe-4S] cluster. The region spanning 207–438 is the Radical SAM core domain; that stretch reads RKNPLIEIIS…DLFYSYEPYA (232 aa). Positions 438 to 500 constitute a TRAM domain; sequence AQRVGEMYTV…KFSMVGEILD (63 aa). The helical transmembrane segment at 533-553 threads the bilayer; that stretch reads VGIALVVGSLAFLLQLLIRFL.

It belongs to the methylthiotransferase family. CDKAL1 subfamily. Requires [4Fe-4S] cluster as cofactor.

The protein localises to the membrane. It carries out the reaction N(6)-L-threonylcarbamoyladenosine(37) in tRNA + (sulfur carrier)-SH + AH2 + 2 S-adenosyl-L-methionine = 2-methylsulfanyl-N(6)-L-threonylcarbamoyladenosine(37) in tRNA + (sulfur carrier)-H + 5'-deoxyadenosine + L-methionine + A + S-adenosyl-L-homocysteine + 2 H(+). Catalyzes the methylthiolation of N6-threonylcarbamoyladenosine (t(6)A), leading to the formation of 2-methylthio-N6-threonylcarbamoyladenosine (ms(2)t(6)A) at position 37 in tRNAs that read codons beginning with adenine. This is Threonylcarbamoyladenosine tRNA methylthiotransferase from Drosophila pseudoobscura pseudoobscura (Fruit fly).